The primary structure comprises 189 residues: Large ribosomal subunit protein eL18 (189 aa).

Belongs to the eukaryotic ribosomal protein eL18 family.

It is found in the cytoplasm. The chain is Large ribosomal subunit protein eL18 (RpL18) from Drosophila pseudoobscura pseudoobscura (Fruit fly).